The primary structure comprises 117 residues: Conotoxin vil14.2 (117 aa).

An N-terminal signal peptide occupies residues 1-22; it reads MGFRVLVLVVMATTFALPFTFF. Positions 23–90 are excised as a propeptide; it reads EEPGRSPFRP…FAELSVGQRR (68 aa). The disordered stretch occupies residues 53–77; the sequence is RADGQPPDMRQPEMRRPEMRRPEVR. Basic and acidic residues predominate over residues 62-77; that stretch reads RQPEMRRPEMRRPEVR. 2 cysteine pairs are disulfide-bonded: Cys-96-Cys-116 and Cys-100-Cys-112.

This sequence belongs to the conotoxin R superfamily. As to expression, expressed by the venom duct.

The protein localises to the secreted. This is Conotoxin vil14.2 from Conus villepinii (Villepin's cone).